An 877-amino-acid polypeptide reads, in one-letter code: Phosphoenolpyruvate carboxylase (877 aa).

Catalysis depends on residues H137 and K544.

This sequence belongs to the PEPCase type 1 family. Mg(2+) is required as a cofactor.

It carries out the reaction oxaloacetate + phosphate = phosphoenolpyruvate + hydrogencarbonate. Its function is as follows. Forms oxaloacetate, a four-carbon dicarboxylic acid source for the tricarboxylic acid cycle. This chain is Phosphoenolpyruvate carboxylase, found in Edwardsiella ictaluri (strain 93-146).